The sequence spans 511 residues: Cytochrome P450 monooxygenase PUL2 (511 aa).

Residues 14–34 form a helical membrane-spanning segment; the sequence is WMAFVYFTPVLFVVLYLLKEW. N-linked (GlcNAc...) asparagine glycosylation is found at Asn116, Asn141, and Asn442. Residue Cys462 coordinates heme.

This sequence belongs to the cytochrome P450 family. It depends on heme as a cofactor.

It localises to the membrane. The protein operates within siderophore biosynthesis. Cytochrome P450 monooxygenase; part of the PUL gene cluster that mediates the formation of pulcherrimin, a red iron-containing pigment composed of two cyclized and modified leucine molecules that acts as a siderophore, a chelator that binds iron outside the cell for subsequent uptake. Two leucine molecules are cyclized via a cyclodipeptide synthase, and the resulting diketopiperazine is oxidized by a cytochrome P450 monooxygenase to generate pulcherriminic acid (PA), which can then spontaneously bind iron to form pulcherrimin. The probable cyclodipeptide synthase PUL1 and the cytochrome P450 monooxygenase PUL2 encode the enzymes responsible for the two-step pulcherrimin biosynthesis pathway. The protein is Cytochrome P450 monooxygenase PUL2 of Kluyveromyces lactis (strain ATCC 8585 / CBS 2359 / DSM 70799 / NBRC 1267 / NRRL Y-1140 / WM37) (Yeast).